We begin with the raw amino-acid sequence, 275 residues long: Large ribosomal subunit protein uL2 (275 aa).

A disordered region spans residues valine 223–lysine 275.

This sequence belongs to the universal ribosomal protein uL2 family. In terms of assembly, part of the 50S ribosomal subunit. Forms a bridge to the 30S subunit in the 70S ribosome.

Functionally, one of the primary rRNA binding proteins. Required for association of the 30S and 50S subunits to form the 70S ribosome, for tRNA binding and peptide bond formation. It has been suggested to have peptidyltransferase activity; this is somewhat controversial. Makes several contacts with the 16S rRNA in the 70S ribosome. The chain is Large ribosomal subunit protein uL2 from Shewanella woodyi (strain ATCC 51908 / MS32).